A 92-amino-acid polypeptide reads, in one-letter code: Putative pterin-4-alpha-carbinolamine dehydratase (92 aa).

The protein belongs to the pterin-4-alpha-carbinolamine dehydratase family.

It carries out the reaction (4aS,6R)-4a-hydroxy-L-erythro-5,6,7,8-tetrahydrobiopterin = (6R)-L-erythro-6,7-dihydrobiopterin + H2O. The protein is Putative pterin-4-alpha-carbinolamine dehydratase of Haloarcula marismortui (strain ATCC 43049 / DSM 3752 / JCM 8966 / VKM B-1809) (Halobacterium marismortui).